The sequence spans 960 residues: Valine--tRNA ligase (960 aa).

The 'HIGH' region signature appears at 42–52 (PNITGNLHMGH). Positions 553–557 (KMSKS) match the 'KMSKS' region motif. Lys556 serves as a coordination point for ATP. Residues 879–950 (VLKAIDKEIE…LSQQLESLHD (72 aa)) are a coiled coil.

Belongs to the class-I aminoacyl-tRNA synthetase family. ValS type 1 subfamily. In terms of assembly, monomer.

It is found in the cytoplasm. It catalyses the reaction tRNA(Val) + L-valine + ATP = L-valyl-tRNA(Val) + AMP + diphosphate. In terms of biological role, catalyzes the attachment of valine to tRNA(Val). As ValRS can inadvertently accommodate and process structurally similar amino acids such as threonine, to avoid such errors, it has a 'posttransfer' editing activity that hydrolyzes mischarged Thr-tRNA(Val) in a tRNA-dependent manner. The polypeptide is Valine--tRNA ligase (Buchnera aphidicola subsp. Schizaphis graminum (strain Sg)).